The primary structure comprises 504 residues: uncharacterized protein (504 aa).

This is an uncharacterized protein from Klebsiella pneumoniae.